The chain runs to 734 residues: Subtilisin-like protease SBT3.2 (734 aa).

Residues 1 to 19 form the signal peptide; the sequence is MTRALILVAICLMLTLNNA. Residues 20 to 88 constitute a propeptide, activation peptide; it reads AETKVHIVYL…ESTLRFYELQ (69 aa). Residues 92–581 form the Peptidase S8 domain; it reads TWDYLQHTSK…GGVVNSEKAA (490 aa). N-linked (GlcNAc...) asparagine glycosylation occurs at N108. The active-site Charge relay system is D122. The N-linked (GlcNAc...) asparagine glycan is linked to N143. H179 (charge relay system) is an active-site residue. 2 N-linked (GlcNAc...) asparagine glycosylation sites follow: N326 and N355. One can recognise a PA domain in the interval 361–438; sequence VCEDLAKNPA…ELGTDILFYI (78 aa). N-linked (GlcNAc...) asparagine glycosylation occurs at N497. The active-site Charge relay system is the S512. An N-linked (GlcNAc...) asparagine glycan is attached at N669.

It belongs to the peptidase S8 family.

It localises to the secreted. The sequence is that of Subtilisin-like protease SBT3.2 from Arabidopsis thaliana (Mouse-ear cress).